A 611-amino-acid chain; its full sequence is Glutamine--fructose-6-phosphate aminotransferase [isomerizing] (611 aa).

The active-site Nucleophile; for GATase activity is Cys-2. The 218-residue stretch at 2 to 219 (CGIVGGVSKT…DGDVAMLQRQ (218 aa)) folds into the Glutamine amidotransferase type-2 domain. 2 SIS domains span residues 287–427 (AAAM…APGA) and 460–601 (WAAR…VDRP). Lys-606 (for Fru-6P isomerization activity) is an active-site residue.

In terms of assembly, homodimer.

The protein resides in the cytoplasm. It catalyses the reaction D-fructose 6-phosphate + L-glutamine = D-glucosamine 6-phosphate + L-glutamate. In terms of biological role, catalyzes the first step in hexosamine metabolism, converting fructose-6P into glucosamine-6P using glutamine as a nitrogen source. This chain is Glutamine--fructose-6-phosphate aminotransferase [isomerizing], found in Acidithiobacillus ferridurans.